Reading from the N-terminus, the 698-residue chain is Probable xyloglucan glycosyltransferase 2 (698 aa).

2 helical membrane-spanning segments follow: residues 124–144 (GFLA…WNGW) and 190–210 (ILLF…CFWI). Residue aspartate 272 is part of the active site. Residues aspartate 331 and aspartate 333 each contribute to the substrate site. The active site involves aspartate 425. The next 4 helical transmembrane spans lie at 503-523 (LILP…TMFV), 528-548 (LPVW…ILPS), 653-668 (LALS…RSLL), and 673-693 (IHFY…LDLI).

The protein belongs to the glycosyltransferase 2 family. Plant cellulose synthase-like C subfamily.

It is found in the golgi apparatus membrane. In terms of biological role, probable beta-1,4-glucan synthase rather involved in the synthesis of the xyloglucan backbone than cellulose. Seems to work simultaneously with xyloglucan 6-xylosyltransferase. Xyloglucan is a noncellulosic polysaccharides of plant cell wall and consists of a glucan backbone substituted by xylose, galactose and fucose. This chain is Probable xyloglucan glycosyltransferase 2 (CSLC2), found in Oryza sativa subsp. japonica (Rice).